Reading from the N-terminus, the 729-residue chain is MIRTSSVLNSTKYFNSHINHLSSHGDHKQVLSTFSSMLANKLLPDTFTFPSLLKACASLQRLSFGLSIHQQVLVNGFSSDFYISSSLVNLYAKFGLLAHARKVFEEMRERDVVHWTAMIGCYSRAGIVGEACSLVNEMRFQGIKPGPVTLLEMLSGVLEITQLQCLHDFAVIYGFDCDIAVMNSMLNLYCKCDHVGDAKDLFDQMEQRDMVSWNTMISGYASVGNMSEILKLLYRMRGDGLRPDQQTFGASLSVSGTMCDLEMGRMLHCQIVKTGFDVDMHLKTALITMYLKCGKEEASYRVLETIPNKDVVCWTVMISGLMRLGRAEKALIVFSEMLQSGSDLSSEAIASVVASCAQLGSFDLGASVHGYVLRHGYTLDTPALNSLITMYAKCGHLDKSLVIFERMNERDLVSWNAIISGYAQNVDLCKALLLFEEMKFKTVQQVDSFTVVSLLQACSSAGALPVGKLIHCIVIRSFIRPCSLVDTALVDMYSKCGYLEAAQRCFDSISWKDVVSWGILIAGYGFHGKGDIALEIYSEFLHSGMEPNHVIFLAVLSSCSHNGMVQQGLKIFSSMVRDFGVEPNHEHLACVVDLLCRAKRIEDAFKFYKENFTRPSIDVLGIILDACRANGKTEVEDIICEDMIELKPGDAGHYVKLGHSFAAMKRWDDVSESWNQMRSLGLKKLPGWSKIEMNGKTTTFFMNHTSHSDDTVSLLKLLSREMMQFGSNN.

PPR repeat units follow at residues 10 to 44, 45 to 79, 80 to 110, 111 to 145, 178 to 208, 209 to 243, 244 to 278, 279 to 309, 310 to 344, 345 to 379, 380 to 414, 415 to 445, 447 to 481, 482 to 512, 513 to 547, 548 to 583, and 584 to 618; these read STKY…KLLP, DTFT…GFSS, DFYI…MRER, DVVH…GIKP, DIAV…MEQR, DMVS…GLRP, DQQT…GFDV, DMHL…IPNK, DVVC…GSDL, SSEA…GYTL, DTPA…DLVS, WNAI…TVQQ, DSFT…FIRP, CSLV…ISWK, DVVS…GMEP, NHVI…GVEP, and NHEH…PSID. A type E motif region spans residues 619-694; the sequence is VLGIILDACR…LPGWSKIEMN (76 aa). The interval 695-723 is type E(+) motif; sequence GKTTTFFMNHTSHSDDTVSLLKLLSREMM.

The protein belongs to the PPR family. PCMP-E subfamily.

The sequence is that of Pentatricopeptide repeat-containing protein At4g04370 (PCMP-E99) from Arabidopsis thaliana (Mouse-ear cress).